We begin with the raw amino-acid sequence, 684 residues long: Galactocerebrosidase (684 aa).

Residues 1–42 (MANSQPKASQQRQAKVMTAAAGSASRVAVPLLLCALLVPGGA) form the signal peptide. The substrate site is built by threonine 109, tryptophan 151, and asparagine 197. Glutamate 198 (proton donor/acceptor) is an active-site residue. Residue glutamate 274 is the Nucleophile of the active site. Cysteines 287 and 394 form a disulfide. 2 N-linked (GlcNAc...) asparagine glycosylation sites follow: asparagine 300 and asparagine 379. Arginine 396 is a substrate binding site. Residues asparagine 403, asparagine 558, asparagine 601, and asparagine 645 are each glycosylated (N-linked (GlcNAc...) asparagine).

The protein belongs to the glycosyl hydrolase 59 family. In terms of tissue distribution, detected in brain and kidney.

The protein resides in the lysosome. The catalysed reaction is a beta-D-galactosyl-(1&lt;-&gt;1')-N-acylsphing-4-enine + H2O = an N-acylsphing-4-enine + D-galactose. The enzyme catalyses a D-galactosylceramide + H2O = an N-acyl-sphingoid base + D-galactose. It catalyses the reaction beta-D-galactosyl-(1&lt;-&gt;1)-sphing-4-enine + H2O = sphing-4-enine + D-galactose. Its function is as follows. Hydrolyzes the galactose ester bonds of glycolipids such as galactosylceramide and galactosylsphingosine. Enzyme with very low activity responsible for the lysosomal catabolism of galactosylceramide, a major lipid in myelin, kidney and epithelial cells of small intestine and colon. The chain is Galactocerebrosidase from Mus musculus (Mouse).